The following is a 184-amino-acid chain: Photosystem I assembly protein Ycf4 (184 aa).

Helical transmembrane passes span 19-39 (ISNFCWAFLLFLGSLGFVLVG) and 64-84 (LVMSFYGIAGLFISSYLWCTI).

This sequence belongs to the Ycf4 family.

It is found in the plastid. It localises to the chloroplast thylakoid membrane. Its function is as follows. Seems to be required for the assembly of the photosystem I complex. This Oenothera elata subsp. hookeri (Hooker's evening primrose) protein is Photosystem I assembly protein Ycf4.